A 490-amino-acid polypeptide reads, in one-letter code: Polyamine oxidase 2 (490 aa).

Residues Glu57, Arg65, Val246, and Glu433 each coordinate FAD. A Microbody targeting signal motif is present at residues 488–490; it reads SRL.

The protein belongs to the flavin monoamine oxidase family. Requires FAD as cofactor. In terms of tissue distribution, highly expressed in flowers and siliques. Also found in leaf and stem and in low levels in cotyledons, roots and in seedlings.

Its subcellular location is the peroxisome. It carries out the reaction spermine + O2 + H2O = 3-aminopropanal + spermidine + H2O2. The catalysed reaction is N(1)-acetylspermine + O2 + H2O = 3-acetamidopropanal + spermidine + H2O2. The enzyme catalyses spermidine + O2 + H2O = 3-aminopropanal + putrescine + H2O2. The protein operates within amine and polyamine degradation; spermine degradation. It functions in the pathway amine and polyamine degradation; spermidine degradation. Flavoenzyme involved in polyamine back-conversion. Catalyzes the oxidation of the secondary amino group of polyamines, such as spermine, spermidine and their acetyl derivatives. Substrate preference is N(1)-acetylspermine &gt; spermine &gt; spermidine. Plays an important role in the regulation of polyamine intracellular concentration. Involved in abscisic acid-mediated developmental processes. May contribute to nitric oxide-mediated effects on root growth. The protein is Polyamine oxidase 2 of Arabidopsis thaliana (Mouse-ear cress).